The chain runs to 332 residues: Fe(3+) dicitrate transport system permease protein FecC (332 aa).

Residues 1 to 7 are Cytoplasmic-facing; the sequence is MTAIKHP. A helical membrane pass occupies residues 8–28; that stretch reads VLLWGLPVAALIIIFWLSLFC. Topologically, residues 29 to 64 are periplasmic; it reads YSAIPVSGADATRALLPGHTPTLPEALVQNLRLPRS. Residues 65–85 traverse the membrane as a helical segment; sequence LVAVLIGASLALAGTLLQTLT. Over 86-100 the chain is Cytoplasmic; the sequence is HNPMASPSLLGINSG. A helical transmembrane segment spans residues 101 to 121; sequence AALAMALTSALSPTPIAGYSL. Residue Ser122 is a topological domain, periplasmic. The helical transmembrane segment at 123–143 threads the bilayer; it reads FIAACGGGVSWLLVMTAGGGF. Topologically, residues 144-151 are cytoplasmic; sequence RHTHDRNK. The helical transmembrane segment at 152–172 threads the bilayer; that stretch reads LILAGIALSAFCMGLTRITLL. The Periplasmic portion of the chain corresponds to 173 to 199; the sequence is LAEDHAYGIFYWLAGGVSHARWQDVWQ. A helical transmembrane segment spans residues 200-220; it reads LLPVVVTAVPVVLLLANQLNL. At 221-244 the chain is on the cytoplasmic side; that stretch reads LNLSDSTAHTLGVNLTRLRLVINM. The helical transmembrane segment at 245–265 threads the bilayer; it reads LVLLLVGACVSVAGPVAFIGL. The Periplasmic portion of the chain corresponds to 266 to 307; the sequence is LVPHLARFWAGFDQRNVLPVSMLLGATLMLLADVLARALAFP. Residues 308-328 traverse the membrane as a helical segment; that stretch reads GDLPAGAVLALIGSPCFVWLV. Over 329 to 332 the chain is Cytoplasmic; sequence RRRG.

It belongs to the binding-protein-dependent transport system permease family. FecCD subfamily. The complex is composed of two ATP-binding proteins (FecE), two transmembrane proteins (FecC and FecD) and a solute-binding protein (FecB). Interacts with FecB.

The protein localises to the cell inner membrane. Functionally, part of the ABC transporter complex FecBCDE involved in citrate-dependent Fe(3+) uptake. Probably responsible for the translocation of the substrate across the membrane. This Escherichia coli (strain K12) protein is Fe(3+) dicitrate transport system permease protein FecC.